The sequence spans 454 residues: Replicative DNA helicase DnaB (454 aa).

The segment at 1–149 (MSELFSERIP…LDEADRKIME (149 aa)) is N-terminal domain (NTD). The segment at 163 to 176 (KDILVQTYDNIEML) is linker helix. The region spanning 179–445 (RDGEITGIPT…NKFVNLERRF (267 aa)) is the SF4 helicase domain. The interval 183–454 (ITGIPTGFTE…FDEAQIPPGA (272 aa)) is C-terminal domain (CTD). ATP is bound by residues Ser213, Gly215, Lys216, Thr217, and Ala218. Glu241 serves as the catalytic Nucleophile. Residues Arg250 and Gln362 each contribute to the ATP site. Residues Arg381, Glu382, and Gly384 each coordinate ssDNA. ATP-binding residues include Lys418, Gln419, and Arg420.

It belongs to the helicase family. DnaB subfamily. Homohexamer. Interacts with DnaG primase, as DnaB(6):DnaG(3). Interacts with the N-terminus of DnaI (shown with DnaI of B.subtilis), forms a helicase DnaB(6):DnaI(6) complex. The DnaB-DnaI complex is disrupted by DnaD (DnaD and DnaI from B.subtilis). A stable complex DnaI(6):DnaB(6):DnaG(3) fragment can be isolated; DnaI and DnaG do not contact each other (DnaI in this complex is derived from B.subtilis). Forms a complex with DNA clamp loader protein tau (shown with B.subtilis HolA) tau(3):DnaB(6); a single ATP hydrolysis even is sufficient for complex formation.

It catalyses the reaction Couples ATP hydrolysis with the unwinding of duplex DNA at the replication fork by translocating in the 5'-3' direction. This creates two antiparallel DNA single strands (ssDNA). The leading ssDNA polymer is the template for DNA polymerase III holoenzyme which synthesizes a continuous strand.. The catalysed reaction is ATP + H2O = ADP + phosphate + H(+). Its function is as follows. The main replicative DNA helicase, it participates in initiation and elongation during chromosome replication. Travels ahead of the DNA replisome, separating double-stranded (ds)DNA into templates for DNA synthesis. Binding of single-stranded (ss)DNA to the hexamer suggests a 2-nucleotide step size for the helicase and a hand-over-hand mechanism of DNA unwinding. Has ssDNA-stimulated ATPase activity. DnaG primase stimulates the helicase activity (the helicase direction was not determine but is probably 5'-3'). Loaded onto DNA by helicase loader DnaI (shown with DnaI of B.subtilis); ATP-binding enhances loading and subsequent ATP hydrolysis dissociates the complex, leaving helicase on the DNA. Binds ssDNA and less well dsDNA, in the presence of ADPNP (probably 5'-adenylyl beta, gamma-imidodiphosphate, but not ATP) binding to both DNAs is improved. This chain is Replicative DNA helicase DnaB, found in Geobacillus stearothermophilus (Bacillus stearothermophilus).